The sequence spans 23 residues: U22-ctenitoxin-Co1a (23 aa).

Expressed by the venom gland.

The protein localises to the secreted. The chain is U22-ctenitoxin-Co1a from Ctenus ornatus (Brazilian spider).